Consider the following 660-residue polypeptide: tRNA 5-methylaminomethyl-2-thiouridine biosynthesis bifunctional protein MnmC (660 aa).

The tract at residues 1–235 (MTITRHARID…KWEVLRGTFI (235 aa)) is tRNA (mnm(5)s(2)U34)-methyltransferase. The interval 266–660 (IGAGLAGCAT…LRGLIRGGGK (395 aa)) is FAD-dependent cmnm(5)s(2)U34 oxidoreductase.

This sequence in the N-terminal section; belongs to the methyltransferase superfamily. tRNA (mnm(5)s(2)U34)-methyltransferase family. The protein in the C-terminal section; belongs to the DAO family. FAD serves as cofactor.

It is found in the cytoplasm. The catalysed reaction is 5-aminomethyl-2-thiouridine(34) in tRNA + S-adenosyl-L-methionine = 5-methylaminomethyl-2-thiouridine(34) in tRNA + S-adenosyl-L-homocysteine + H(+). Catalyzes the last two steps in the biosynthesis of 5-methylaminomethyl-2-thiouridine (mnm(5)s(2)U) at the wobble position (U34) in tRNA. Catalyzes the FAD-dependent demodification of cmnm(5)s(2)U34 to nm(5)s(2)U34, followed by the transfer of a methyl group from S-adenosyl-L-methionine to nm(5)s(2)U34, to form mnm(5)s(2)U34. The polypeptide is tRNA 5-methylaminomethyl-2-thiouridine biosynthesis bifunctional protein MnmC (Pseudomonas savastanoi pv. phaseolicola (strain 1448A / Race 6) (Pseudomonas syringae pv. phaseolicola (strain 1448A / Race 6))).